A 218-amino-acid polypeptide reads, in one-letter code: Capsid protein (218 aa).

Position 1 is an N-acetylmethionine; by host (Met1). The tract at residues 1–28 (MDKSESTSAGRNRRRRPRRGSRSAPSSA) is disordered. A compositionally biased stretch (basic residues) spans 11-21 (RNRRRRPRRGS).

It belongs to the cucumovirus capsid protein family.

The protein localises to the virion. Capsid protein. Probably binds RNA and plays a role in packaging. The protein is Capsid protein of Cucumis sativus (Cucumber).